The sequence spans 1453 residues: Scavenger receptor cysteine-rich type 1 protein M160 (1453 aa).

The signal sequence occupies residues 1–40 (MMLPQNSWHIDFGRCCCHQNLFSAVVTCILLLNSCFLISS). Over 41-1359 (FNGTDLELRL…LKSLNASSGH (1319 aa)) the chain is Extracellular. Asparagine 42, asparagine 78, asparagine 120, and asparagine 161 each carry an N-linked (GlcNAc...) asparagine glycan. SRCR domains lie at 48–148 (LRLV…VNCY), 155–255 (LRLV…LTCY), 262–362 (LRLV…VICS), 369–469 (LRLA…VICS), 476–576 (LRLV…VTCS), 583–683 (LRLV…VICS), 690–790 (LRLV…LICS), 795–895 (PRLV…VVCS), and 900–1000 (VRLV…VICT). Disulfide bonds link cysteine 73/cysteine 137, cysteine 86/cysteine 147, and cysteine 117/cysteine 127. 6 cysteine pairs are disulfide-bonded: cysteine 180–cysteine 244, cysteine 193–cysteine 254, cysteine 224–cysteine 234, cysteine 287–cysteine 351, cysteine 300–cysteine 361, and cysteine 331–cysteine 341. 5 N-linked (GlcNAc...) asparagine glycosylation sites follow: asparagine 334, asparagine 377, asparagine 441, asparagine 548, and asparagine 637. 18 disulfides stabilise this stretch: cysteine 394–cysteine 458, cysteine 407–cysteine 468, cysteine 438–cysteine 448, cysteine 501–cysteine 565, cysteine 514–cysteine 575, cysteine 545–cysteine 555, cysteine 608–cysteine 672, cysteine 621–cysteine 682, cysteine 652–cysteine 662, cysteine 715–cysteine 779, cysteine 728–cysteine 789, cysteine 759–cysteine 769, cysteine 820–cysteine 884, cysteine 833–cysteine 894, cysteine 864–cysteine 874, cysteine 925–cysteine 989, cysteine 938–cysteine 999, and cysteine 969–cysteine 979. 4 N-linked (GlcNAc...) asparagine glycosylation sites follow: asparagine 972, asparagine 1013, asparagine 1084, and asparagine 1104. SRCR domains follow at residues 1036–1136 (LRLV…VICS), 1141–1243 (LRLY…ITCE), and 1246–1346 (IRVR…VRCS). 3 disulfides stabilise this stretch: cysteine 1061–cysteine 1125, cysteine 1074–cysteine 1135, and cysteine 1105–cysteine 1115. N-linked (GlcNAc...) asparagine glycans are attached at residues asparagine 1161 and asparagine 1171. Disulfide bonds link cysteine 1181/cysteine 1242, cysteine 1212/cysteine 1222, cysteine 1271/cysteine 1335, cysteine 1284/cysteine 1345, and cysteine 1315/cysteine 1325. Asparagine 1318 and asparagine 1354 each carry an N-linked (GlcNAc...) asparagine glycan. The chain crosses the membrane as a helical span at residues 1360–1380 (LALILSSIFGLLLLVLFILFL). Over 1381–1453 (TWCRVQKQKH…GVLPASEATK (73 aa)) the chain is Cytoplasmic. Residues 1418 to 1435 (EDPHGTRTSDDTPNHGCE) are compositionally biased toward basic and acidic residues. A disordered region spans residues 1418 to 1453 (EDPHGTRTSDDTPNHGCEDASDTSLLGVLPASEATK).

As to expression, isoform 1 is highly expressed in the spleen, lymph nodes, thymus, and fetal liver and weakly expressed in bone marrow and no expression was found in peripheral blood leukocytes. Isoform 1 expression is restricted to the monocyte and macrophage cell lines. Isoform 2 is only expressed in spleen.

The protein localises to the cell membrane. It is found in the secreted. In Homo sapiens (Human), this protein is Scavenger receptor cysteine-rich type 1 protein M160 (CD163L1).